Reading from the N-terminus, the 2036-residue chain is Ral GTPase-activating protein subunit alpha-1 (2036 aa).

Disordered regions lie at residues 343 to 384 and 476 to 497; these read LVSR…SSLC and EEGE…RNSS. Over residues 345–365 the composition is skewed to basic and acidic residues; that stretch reads SREESKNDNADKTDRTTEPEQ. Composition is skewed to polar residues over residues 366–384 and 486–497; these read SHSN…SSLC and GTNTADHVRNSS. Ser711 and Ser721 each carry phosphoserine. Residues 715–753 are disordered; the sequence is SFSRGWSRDQPGQAPMRQRSATTTGSPGTEKARSIVRQK. Thr754 carries the post-translational modification Phosphothreonine. Position 773 is a phosphoserine (Ser773). Thr778 is modified (phosphothreonine). A phosphoserine mark is found at Ser797, Ser860, Ser861, and Ser864. Disordered stretches follow at residues 849-910 and 982-1009; these read SGNA…SDSH and TITG…STLN. Polar residues predominate over residues 850–863; that stretch reads GNASTMTRRGSSPG. Residues 895–910 show a composition bias toward low complexity; sequence SPASAGSSDLISSDSH. The segment covering 983–1009 has biased composition (polar residues); the sequence is ITGSESASPVHSPLGSRSQTPSPSTLN. 4 positions are modified to phosphoserine: Ser986, Ser990, Ser994, and Ser1000. Thr1002 carries the post-translational modification Phosphothreonine. 2 positions are modified to phosphoserine: Ser1004 and Ser1478. The tract at residues 1327–2035 is minimal domain that binds to TCF3/E12; the sequence is FTNKTVAHVA…PYHHLPSDAD (709 aa). Positions 1716 to 1744 form a coiled coil; that stretch reads KQENDVINAILKQHTEEKEFVEKHFNDLN. Positions 1796–2004 constitute a Rap-GAP domain; that stretch reads LRNLDSRQCR…EERARYLQTI (209 aa).

Component of the heterodimeric RalGAP1 complex with RALGAPB. Heterodimerization is required for activity. Interacts with the HLH region of TCF3/isoform E12. Widely expressed.

It is found in the cytoplasm. The protein resides in the nucleus. Its function is as follows. Catalytic subunit of the heterodimeric RalGAP1 complex which acts as a GTPase activator for the Ras-like small GTPases RALA and RALB. In Homo sapiens (Human), this protein is Ral GTPase-activating protein subunit alpha-1 (RALGAPA1).